Reading from the N-terminus, the 438-residue chain is EF-hand calcium-binding domain-containing protein 3 (438 aa).

EF-hand domains are found at residues 47–82 (SQMR…LGMN) and 83–118 (LTKH…KNRF). Ca(2+) contacts are provided by aspartate 96, aspartate 98, aspartate 100, lysine 102, and aspartate 107. A Phosphotyrosine modification is found at tyrosine 279. The interval 413-438 (SSSDISECDTDTGRKRKRKGFKGFRQ) is disordered. A compositionally biased stretch (basic residues) spans 426 to 438 (RKRKRKGFKGFRQ).

The polypeptide is EF-hand calcium-binding domain-containing protein 3 (EFCAB3) (Bos taurus (Bovine)).